A 367-amino-acid chain; its full sequence is Cobalt-precorrin-5B C(1)-methyltransferase (367 aa).

The protein belongs to the CbiD family.

It catalyses the reaction Co-precorrin-5B + S-adenosyl-L-methionine = Co-precorrin-6A + S-adenosyl-L-homocysteine. The protein operates within cofactor biosynthesis; adenosylcobalamin biosynthesis; cob(II)yrinate a,c-diamide from sirohydrochlorin (anaerobic route): step 6/10. Functionally, catalyzes the methylation of C-1 in cobalt-precorrin-5B to form cobalt-precorrin-6A. This is Cobalt-precorrin-5B C(1)-methyltransferase from Priestia megaterium (Bacillus megaterium).